Consider the following 154-residue polypeptide: Putative pre-16S rRNA nuclease (154 aa).

It belongs to the YqgF nuclease family.

The protein resides in the cytoplasm. In terms of biological role, could be a nuclease involved in processing of the 5'-end of pre-16S rRNA. The chain is Putative pre-16S rRNA nuclease from Rickettsia bellii (strain OSU 85-389).